Here is a 157-residue protein sequence, read N- to C-terminus: Isotocin-neurophysin IT 1 (157 aa).

The signal sequence occupies residues 1-20 (MFGTSVSALCLLFLLSVCTA). Cys21 and Cys26 are oxidised to a cystine. Residue Gly29 is modified to Glycine amide. Cystine bridges form between Cys42–Cys86, Cys45–Cys59, Cys53–Cys76, Cys60–Cys66, Cys93–Cys106, Cys100–Cys118, and Cys107–Cys112.

Belongs to the vasopressin/oxytocin family. In terms of processing, seven disulfide bonds are present in neurophysin.

It is found in the secreted. Functionally, isotocin causes contraction of smooth muscles. The sequence is that of Isotocin-neurophysin IT 1 from Oncorhynchus keta (Chum salmon).